Consider the following 245-residue polypeptide: tRNA1(Val) (adenine(37)-N6)-methyltransferase (245 aa).

It belongs to the methyltransferase superfamily. tRNA (adenine-N(6)-)-methyltransferase family.

It localises to the cytoplasm. The enzyme catalyses adenosine(37) in tRNA1(Val) + S-adenosyl-L-methionine = N(6)-methyladenosine(37) in tRNA1(Val) + S-adenosyl-L-homocysteine + H(+). Specifically methylates the adenine in position 37 of tRNA(1)(Val) (anticodon cmo5UAC). The protein is tRNA1(Val) (adenine(37)-N6)-methyltransferase of Klebsiella pneumoniae (strain 342).